The chain runs to 65 residues: Dybowskin-2CDYa (65 aa).

A signal peptide spans 1-22 (MFTLKKSLLLLFFIGVIKLSLC). Positions 23–47 (EEERNADDDERRDDPDEMDVEVENR) are excised as a propeptide. The segment covering 26 to 43 (RNADDDERRDDPDEMDVE) has biased composition (acidic residues). Residues 26 to 65 (RNADDDERRDDPDEMDVEVENRSAVGRHGRRFGLRKHRKH) are disordered. Residues 50 to 65 (VGRHGRRFGLRKHRKH) are compositionally biased toward basic residues.

Belongs to the frog skin active peptide (FSAP) family. Brevinin subfamily. As to expression, expressed by the skin glands.

The protein resides in the secreted. Antimicrobial peptide. Has activity against the Gram-positive bacterium S.aureus (MIC=6 uM) and the Gram-negative bacterium E.coli (MIC=3 uM). Lacks hemolytic activity against human erythrocytes. This is Dybowskin-2CDYa from Rana dybowskii (Dybovsky's frog).